Consider the following 41-residue polypeptide: IPQCADIKESGQPNDKCRCNGITCTVGKCKIGRGDDNDKCT.

Residues Arg33 to Asp35 carry the Cell attachment site motif.

The protein belongs to the ornatin family.

It is found in the secreted. Its function is as follows. Potent inhibitor of fibrinogen interaction with platelet receptors expressed on glycoprotein IIb-IIIa complex. May prevent blood from clotting during either feeding and/or storage of ingested blood. The sequence is that of Ornatin-A3 from Placobdella ornata (Turtle leech).